A 313-amino-acid polypeptide reads, in one-letter code: tRNA dimethylallyltransferase (313 aa).

9–16 (GPTATGKS) serves as a coordination point for ATP. A substrate-binding site is contributed by 11-16 (TATGKS).

Belongs to the IPP transferase family. Monomer. It depends on Mg(2+) as a cofactor.

The enzyme catalyses adenosine(37) in tRNA + dimethylallyl diphosphate = N(6)-dimethylallyladenosine(37) in tRNA + diphosphate. Its function is as follows. Catalyzes the transfer of a dimethylallyl group onto the adenine at position 37 in tRNAs that read codons beginning with uridine, leading to the formation of N6-(dimethylallyl)adenosine (i(6)A). This is tRNA dimethylallyltransferase from Nocardia farcinica (strain IFM 10152).